We begin with the raw amino-acid sequence, 357 residues long: Arginine kinase (357 aa).

At Ala-2 the chain carries N-acetylalanine. Positions 9-91 (KLEEGFKKLE…FDPIIEDYHK (83 aa)) constitute a Phosphagen kinase N-terminal domain. An L-arginine-binding site is contributed by 64 to 68 (GVGVY). A Phosphagen kinase C-terminal domain is found at 119–356 (FVISTRVRCG…LELIKIEKEM (238 aa)). Residues 122–126 (STRVR) and His-185 each bind ATP. Residue Glu-225 participates in L-arginine binding. Arg-229 contributes to the ATP binding site. Cys-271 contributes to the L-arginine binding site. Residues 280-284 (RASVH) and 309-314 (RGTRGE) contribute to the ATP site. Glu-314 is a binding site for L-arginine.

The protein belongs to the ATP:guanido phosphotransferase family.

The enzyme catalyses L-arginine + ATP = N(omega)-phospho-L-arginine + ADP + H(+). This is Arginine kinase from Callinectes sapidus (Blue crab).